The sequence spans 458 residues: Transmembrane protein adipocyte-associated 1 homolog (458 aa).

2 N-linked (GlcNAc...) asparagine glycosylation sites follow: Asn-21 and Asn-45. 7 helical membrane-spanning segments follow: residues 81–101 (VILVPNILFLLFLILKCGSVI), 114–134 (AFTLLVYVSTLVNIIRCAYSM), 152–172 (IIIKFFYLTAEFCALTFGLLF), 181–201 (ILIALLGTLLVSIPHTAVQVI), 225–245 (FLFWVFSSAVLALVYFFIMCL), 263–283 (LIYCMMMVVLNVLQSMGAALI), and 291–311 (LCFVGVSTYVYFVLYPPIIYF). Residues Asn-323 and Asn-324 are each glycosylated (N-linked (GlcNAc...) asparagine). Positions 409–458 (RTGSDDYAHHRDSMLSEPSTGTTTRHLKGLGPQGSLVFEDDPSSLTSLRM) are disordered. The span at 411–422 (GSDDYAHHRDSM) shows a compositional bias: basic and acidic residues.

Belongs to the UPF0359 family.

The protein resides in the membrane. This Caenorhabditis elegans protein is Transmembrane protein adipocyte-associated 1 homolog (tpra-1).